We begin with the raw amino-acid sequence, 223 residues long: Serine/threonine/tyrosine-interacting protein B (223 aa).

The Tyrosine-protein phosphatase domain occupies Glu-28 to Ala-176.

It belongs to the protein-tyrosine phosphatase family. Non-receptor class subfamily.

In terms of biological role, catalytically inactive phosphatase. In Xenopus laevis (African clawed frog), this protein is Serine/threonine/tyrosine-interacting protein B (styx-b).